The chain runs to 313 residues: Ribosomal RNA small subunit methyltransferase H (313 aa).

S-adenosyl-L-methionine-binding positions include 36 to 38 (GGH), Asp56, Phe80, Asp102, and Gln109.

This sequence belongs to the methyltransferase superfamily. RsmH family.

The protein resides in the cytoplasm. It catalyses the reaction cytidine(1402) in 16S rRNA + S-adenosyl-L-methionine = N(4)-methylcytidine(1402) in 16S rRNA + S-adenosyl-L-homocysteine + H(+). In terms of biological role, specifically methylates the N4 position of cytidine in position 1402 (C1402) of 16S rRNA. The protein is Ribosomal RNA small subunit methyltransferase H of Actinobacillus pleuropneumoniae serotype 3 (strain JL03).